Consider the following 86-residue polypeptide: Large ribosomal subunit protein bL27 (86 aa).

This sequence belongs to the bacterial ribosomal protein bL27 family.

This is Large ribosomal subunit protein bL27 from Koribacter versatilis (strain Ellin345).